The primary structure comprises 359 residues: Peptide chain release factor 1 (359 aa).

Gln-235 is subject to N5-methylglutamine. The segment at 285–305 (KRDSEISQMRKSQIGSGDRSE) is disordered. Polar residues predominate over residues 290–299 (ISQMRKSQIG).

Belongs to the prokaryotic/mitochondrial release factor family. In terms of processing, methylated by PrmC. Methylation increases the termination efficiency of RF1.

It is found in the cytoplasm. In terms of biological role, peptide chain release factor 1 directs the termination of translation in response to the peptide chain termination codons UAG and UAA. The protein is Peptide chain release factor 1 of Ehrlichia canis (strain Jake).